The chain runs to 178 residues: Crossover junction endodeoxyribonuclease RuvC (178 aa).

Residues Asp-11, Glu-71, and Asp-143 contribute to the active site. The Mg(2+) site is built by Asp-11, Glu-71, and Asp-143.

It belongs to the RuvC family. As to quaternary structure, homodimer which binds Holliday junction (HJ) DNA. The HJ becomes 2-fold symmetrical on binding to RuvC with unstacked arms; it has a different conformation from HJ DNA in complex with RuvA. In the full resolvosome a probable DNA-RuvA(4)-RuvB(12)-RuvC(2) complex forms which resolves the HJ. Requires Mg(2+) as cofactor.

It localises to the cytoplasm. It carries out the reaction Endonucleolytic cleavage at a junction such as a reciprocal single-stranded crossover between two homologous DNA duplexes (Holliday junction).. In terms of biological role, the RuvA-RuvB-RuvC complex processes Holliday junction (HJ) DNA during genetic recombination and DNA repair. Endonuclease that resolves HJ intermediates. Cleaves cruciform DNA by making single-stranded nicks across the HJ at symmetrical positions within the homologous arms, yielding a 5'-phosphate and a 3'-hydroxyl group; requires a central core of homology in the junction. The consensus cleavage sequence is 5'-(A/T)TT(C/G)-3'. Cleavage occurs on the 3'-side of the TT dinucleotide at the point of strand exchange. HJ branch migration catalyzed by RuvA-RuvB allows RuvC to scan DNA until it finds its consensus sequence, where it cleaves and resolves the cruciform DNA. The polypeptide is Crossover junction endodeoxyribonuclease RuvC (Neisseria meningitidis serogroup A / serotype 4A (strain DSM 15465 / Z2491)).